The primary structure comprises 1108 residues: Retinal guanylyl cyclase 2 (1108 aa).

The first 50 residues, 1–50 (MFLGPWPFSRLLSWFAISSRLSGQHGLTSSKFLRYLCLLALLPLIWWGQA), serve as a signal peptide directing secretion. Topologically, residues 51-465 (LPYKIGVIGP…QGKICQGGID (415 aa)) are extracellular. A disulfide bridge links Cys104 with Cys132. Residues 466–490 (PALAMMVCFALLLALLSINGFAYFI) form a helical membrane-spanning segment. The Cytoplasmic portion of the chain corresponds to 491 to 1108 (RRRINKIQLI…AERQLVRNKP (618 aa)). Residues 532 to 812 (FQIISEVQSG…DEIFNQFKTF (281 aa)) enclose the Protein kinase domain. The 131-residue stretch at 884 to 1014 (TLYFSDIVGF…DTVNTASRME (131 aa)) folds into the Guanylate cyclase domain.

Belongs to the adenylyl cyclase class-4/guanylyl cyclase family. Homodimer. Interacts with RD3; promotes the exit of GUCY2F from the endoplasmic reticulum and its trafficking to the photoreceptor outer segments. Post-translationally, there are 9 conserved cysteine residues in sensory guanylate cyclases, 6 in the extracellular domain, which may be involved in intra- or interchain disulfide bonds. In terms of tissue distribution, expressed only in the eye.

The protein resides in the membrane. The protein localises to the photoreceptor outer segment membrane. It carries out the reaction GTP = 3',5'-cyclic GMP + diphosphate. With respect to regulation, activated by GUCA1B when free calcium ions concentration is low, and inhibited by GUCA1B when free calcium ions concentration is high. Inhibited by RD3. Its function is as follows. Responsible for the synthesis of cyclic GMP (cGMP) in rods and cones of photoreceptors. Plays an essential role in phototransduction, by mediating cGMP replenishment. May also participate in the trafficking of membrane-asociated proteins to the photoreceptor outer segment membrane. The protein is Retinal guanylyl cyclase 2 (Gucy2f) of Rattus norvegicus (Rat).